The primary structure comprises 240 residues: MORN repeat-containing protein 3 (240 aa).

The interval C6–G35 is interaction with MDM2. 7 MORN repeats span residues Y38–A60, Y62–T84, Y91–Y113, Y114–I136, Y137–R159, Y160–Q182, and F184–E205. The segment at T76–K100 is interaction with SIRT1. Residues A206 to D240 form an interaction with TP53 region.

In terms of assembly, interacts with MEIG1. Interacts with TP53, MDM2 and SIRT1; the interactions mediate post-transcriptional modifications of TP53 by MDM2 and SIRT1.

It is found in the cytoplasmic vesicle. The protein localises to the secretory vesicle. It localises to the acrosome. In terms of biological role, assembles a suppression complex (suppresome) by tethering SIRT1 and MDM2 to regulate composite modifications of p53/TP53. Confers both deacetylation-mediated functional inactivation, by SIRT1, and ubiquitination-dependent degradation, by MDM2, of p53/TP53, promoting a proliferative and cell survival behaviors. May play a role in the regulation of spermatogenesis. This chain is MORN repeat-containing protein 3, found in Homo sapiens (Human).